A 77-amino-acid polypeptide reads, in one-letter code: uncharacterized protein (77 aa).

It to E.coli YdfK.

This is an uncharacterized protein from Escherichia coli (strain K12).